The primary structure comprises 382 residues: Exostosin-1 homolog (382 aa).

A signal peptide spans Met1–Leu20. Residue Asn268 is glycosylated (N-linked (GlcNAc...) asparagine).

Belongs to the glycosyltransferase 47 family. As to quaternary structure, interacts with rib-2.

The protein localises to the endoplasmic reticulum. It is found in the golgi apparatus. In terms of biological role, required for the biosynthesis of heparan sulfate by positively regulating N-acetylglucosamine transferase II (GlcNAcT-II) and glucuronyl transferase II (GlcAT-II) activities of glycosyltransferase rib-2. Probably not directly involved in chondroitin sulfate biosynthesis but negatively regulates chondroitin sulfate levels. Maternally required for normal ventral epidermal enclosure and for embryo elongation during the early stages of embryonic development. In addition, involved in the elongation of the pharyngeal isthmus and in the organization of the actin cytoskeleton in the pharyngeal muscles during the later stages embryonic development. In adults, regulates egg-laying and the normal morphogenesis of the vulva. Also involved in the directed migration of hermaphrodite-specific neurons. The protein is Exostosin-1 homolog (rib-1) of Caenorhabditis elegans.